Consider the following 276-residue polypeptide: Prohibitin 1 (276 aa).

This sequence belongs to the prohibitin family.

Functionally, required for larval metabolism or for the progression of the larva into a pupa. The chain is Prohibitin 1 from Drosophila melanogaster (Fruit fly).